The primary structure comprises 342 residues: Peptide chain release factor 1 (342 aa).

The residue at position 211 (Q211) is an N5-methylglutamine. Residues K262–K282 form a disordered region.

This sequence belongs to the prokaryotic/mitochondrial release factor family. In terms of processing, methylated by PrmC. Methylation increases the termination efficiency of RF1.

The protein resides in the cytoplasm. Its function is as follows. Peptide chain release factor 1 directs the termination of translation in response to the peptide chain termination codons UAG and UAA. The polypeptide is Peptide chain release factor 1 (prfA) (Thermotoga maritima (strain ATCC 43589 / DSM 3109 / JCM 10099 / NBRC 100826 / MSB8)).